A 483-amino-acid polypeptide reads, in one-letter code: Regulatory protein ViaA (483 aa).

The protein belongs to the ViaA family. As to quaternary structure, homodimer. Interacts with RavA.

Its subcellular location is the cytoplasm. Component of the RavA-ViaA chaperone complex, which may act on the membrane to optimize the function of some of the respiratory chains. ViaA stimulates the ATPase activity of RavA. This Shigella dysenteriae serotype 1 (strain Sd197) protein is Regulatory protein ViaA.